The sequence spans 1403 residues: DNA-directed RNA polymerase subunit beta' (1403 aa).

4 residues coordinate Zn(2+): C71, C73, C86, and C89. 3 residues coordinate Mg(2+): D462, D464, and D466. Zn(2+)-binding residues include C811, C885, C892, and C895.

The protein belongs to the RNA polymerase beta' chain family. As to quaternary structure, the RNAP catalytic core consists of 2 alpha, 1 beta, 1 beta' and 1 omega subunit. When a sigma factor is associated with the core the holoenzyme is formed, which can initiate transcription. It depends on Mg(2+) as a cofactor. Requires Zn(2+) as cofactor.

It catalyses the reaction RNA(n) + a ribonucleoside 5'-triphosphate = RNA(n+1) + diphosphate. In terms of biological role, DNA-dependent RNA polymerase catalyzes the transcription of DNA into RNA using the four ribonucleoside triphosphates as substrates. In Bartonella tribocorum (strain CIP 105476 / IBS 506), this protein is DNA-directed RNA polymerase subunit beta'.